The sequence spans 269 residues: Zinc finger protein SNAI2 (269 aa).

Residues 1–20 are SNAG domain; sequence MPRSFLVKKHFNASKKPNYS. Positions 81–117 are disordered; that stretch reads SSSLGRVSPPPSSDTSSKDHSGSESPISDEEERLQPK. 4 C2H2-type zinc fingers span residues 129-151, 160-182, 186-208, and 214-236; these read FQCN…KQLH, FSCK…IRTH, CVCK…IRTH, and FSCP…LQTH. The C2H2-type 5; atypical zinc-finger motif lies at 242 to 265; sequence YQCKNCSKTFSRMSLLHKHEESGC.

The protein belongs to the snail C2H2-type zinc-finger protein family. Interacts (via SNAG domain) with LIMD1 (via LIM domains), WTIP (via LIM domains) and AJUBA (via LIM domains). Interacts (via zinc fingers) with KPNA2, KPNB1, and TNPO1. May interact (via zinc fingers) with IPO7. Post-translationally, phosphorylated by GSK3B. Once phosphorylated, it becomes a target for ubiquitination. Ubiquitinated by the SCF(FBXO11) complex; ubiquitination requires previous GSK3B-mediated SNAI2 phosphorylation.

It localises to the nucleus. The protein localises to the cytoplasm. Its function is as follows. Transcriptional repressor that modulates both activator-dependent and basal transcription. Involved in the generation and migration of neural crest cells. Plays a role in mediating RAF1-induced transcriptional repression of the TJ protein, occludin (OCLN) and subsequent oncogenic transformation of epithelial cells. Represses BRCA2 expression by binding to its E2-box-containing silencer and recruiting CTBP1 and HDAC1 in breast cells. In epidermal keratinocytes, binds to the E-box in ITGA3 promoter and represses its transcription. Involved in the regulation of ITGB1 and ITGB4 expression and cell adhesion and proliferation in epidermal keratinocytes. Binds to E-box2 domain of BSG and activates its expression during TGFB1-induced epithelial-mesenchymal transition (EMT) in hepatocytes. Represses E-Cadherin/CDH1 transcription via E-box elements. Involved in osteoblast maturation. Binds to RUNX2 and SOC9 promoters and may act as a positive and negative transcription regulator, respectively, in osteoblasts. Binds to CXCL12 promoter via E-box regions in mesenchymal stem cells and osteoblasts. Plays an essential role in TWIST1-induced EMT and its ability to promote invasion and metastasis. The protein is Zinc finger protein SNAI2 (Snai2) of Mus musculus (Mouse).